The sequence spans 122 residues: Fluoride-specific ion channel FluC (122 aa).

4 helical membrane passes run 4-24 (LAVLVGGGVGALVRYLVSIFI), 33-53 (LGTMVINTTGAFLIGFLSIYL), 66-86 (LLITGFLGGYTTFSTFTLEGI), and 95-115 (LKAFYYIVGTNVIGFLFVALG). 2 residues coordinate Na(+): Gly73 and Thr76.

Belongs to the fluoride channel Fluc/FEX (TC 1.A.43) family.

It localises to the cell inner membrane. The catalysed reaction is fluoride(in) = fluoride(out). With respect to regulation, na(+) is not transported, but it plays an essential structural role and its presence is essential for fluoride channel function. Its function is as follows. Fluoride-specific ion channel. Important for reducing fluoride concentration in the cell, thus reducing its toxicity. The polypeptide is Fluoride-specific ion channel FluC (Hydrogenobaculum sp. (strain Y04AAS1)).